A 32-amino-acid polypeptide reads, in one-letter code: Photosystem I reaction center subunit XII (32 aa).

A helical transmembrane segment spans residues 10 to 27 (VVALISALVTGILALRLG).

The protein belongs to the PsaM family.

It localises to the plastid. The protein localises to the chloroplast thylakoid membrane. The sequence is that of Photosystem I reaction center subunit XII from Zygnema circumcarinatum (Green alga).